The primary structure comprises 549 residues: FERM domain-containing protein 1 (549 aa).

Residues 1 to 40 (MAVPPRGRGIDPARTNPDTFPPSGARCMEPSPERPACSQQ) are disordered. Residues 54-369 (RDVLVLLPSR…DELELDLASR (316 aa)) form the FERM domain. Disordered regions lie at residues 377-400 (SSQHCPHCLSRHSADSHGSSYTSG) and 422-464 (HGLH…GQSA). Residues 430–443 (SSSPRTSRSHPSTR) show a composition bias toward low complexity. Polar residues predominate over residues 444–462 (GDSQATRQEPCTQVRTRGQ).

This chain is FERM domain-containing protein 1 (FRMD1), found in Homo sapiens (Human).